The primary structure comprises 416 residues: Putative F-box/kelch-repeat protein At1g12870 (416 aa).

Residues 27–76 (MIASSSLPDDVVEEIFLKLPVKALMRFKSLSKQWRSTLESCYFSQRHLKI) enclose the F-box domain. Kelch repeat units follow at residues 199-243 (LVWL…PASA) and 297-341 (CMYE…HVLD).

This chain is Putative F-box/kelch-repeat protein At1g12870, found in Arabidopsis thaliana (Mouse-ear cress).